The primary structure comprises 491 residues: MEHPLNIYNTLTRKKEQFIPLHEPHVGMYVCGPTVYGDAHLGHARPAITFDLLFRYLTHLGYKVRYVRNITDVGHLEHDADDGEDKIAKKARLEQLEPMEVVQYYLNRYHQAMDALNVLPPSIEPHASGHIIEQIELVKKILDNGYAYESQGSVYFDVEKYNKDHKYGILSGRNIEDMLNTTRALDGQDEKHNAIDFALWKCAQPEHIMRWPSPWSDGFPGWHCECTAMGKKYLGEHFDIHGGGMDLIFPHHECEIAQAVASQGDDMVHYWMHNNMITINGQKMGKSLGNFITLEQFFTGDHPSLQQAYSAMTIRFFILQAHYRSTVDFSNEALQAAEKGLSRLMEAYGHLMKLQPSATSTVDTKGLREKCFEAMNDDLNSPIVISHLFDATRAINSVKDGKATLSEEDLKELQEVFHLFLFDILGMKDEASASGNHYEAFGKAVDLLLSIRQQAKANKDWATSDKIRNELTAMGFEIKDTKDGAEWKLSK.

Residue Cys31 coordinates Zn(2+). A 'HIGH' region motif is present at residues Pro33–His43. Positions 226, 251, and 255 each coordinate Zn(2+). Positions Lys283–Ser287 match the 'KMSKS' region motif. Lys286 contributes to the ATP binding site.

The protein belongs to the class-I aminoacyl-tRNA synthetase family. Monomer. Zn(2+) serves as cofactor.

It is found in the cytoplasm. The enzyme catalyses tRNA(Cys) + L-cysteine + ATP = L-cysteinyl-tRNA(Cys) + AMP + diphosphate. The polypeptide is Cysteine--tRNA ligase (Parabacteroides distasonis (strain ATCC 8503 / DSM 20701 / CIP 104284 / JCM 5825 / NCTC 11152)).